The primary structure comprises 286 residues: Type II restriction enzyme NgoMIV (286 aa).

Mg(2+) contacts are provided by Asp-140 and Cys-186.

In terms of assembly, homotetramer. Requires Mg(2+) as cofactor.

It catalyses the reaction Endonucleolytic cleavage of DNA to give specific double-stranded fragments with terminal 5'-phosphates.. A P subtype restriction enzyme that recognizes the double-stranded sequence 5'-GCCGGC-3' and cleaves after G-1. The sequence is that of Type II restriction enzyme NgoMIV (ngoMIVR) from Neisseria gonorrhoeae.